Reading from the N-terminus, the 288-residue chain is 18S rRNA aminocarboxypropyltransferase (288 aa).

Residues serine 43, valine 91, leucine 114, and tryptophan 129 each contribute to the S-adenosyl-L-methionine site. The span at isoleucine 209 to leucine 221 shows a compositional bias: polar residues. The disordered stretch occupies residues isoleucine 209–asparagine 267. A compositionally biased stretch (basic and acidic residues) spans asparagine 229–proline 253.

The protein belongs to the TDD superfamily. TSR3 family.

It localises to the cytoplasm. Its subcellular location is the nucleus. The enzyme catalyses an N(1)-methylpseudouridine in rRNA + S-adenosyl-L-methionine = N(1)-methyl-N(3)-[(3S)-3-amino-3-carboxypropyl]pseudouridine in rRNA + S-methyl-5'-thioadenosine + H(+). The catalysed reaction is N(1)-methylpseudouridine(1191) in yeast 18S rRNA + S-adenosyl-L-methionine = N(1)-methyl-N(3)-[(3S)-3-amino-3-carboxypropyl]pseudouridine(1191) in yeast 18S rRNA + S-methyl-5'-thioadenosine + H(+). In terms of biological role, aminocarboxypropyltransferase that catalyzes the aminocarboxypropyl transfer on pseudouridine at position 1191 (Psi1191) in 18S rRNA. It constitutes the last step in biosynthesis of the hypermodified N1-methyl-N3-(3-amino-3-carboxypropyl) pseudouridine (m1acp3-Psi) conserved in eukaryotic 18S rRNA. Required for processing 35S pre-rRNA at site D. The chain is 18S rRNA aminocarboxypropyltransferase from Schizosaccharomyces pombe (strain 972 / ATCC 24843) (Fission yeast).